Here is a 272-residue protein sequence, read N- to C-terminus: Endogenous Bornavirus-like nucleoprotein 2 (272 aa).

The segment at 48–70 (MSHLRKDSQPSSPGDDAMDRSGL) is disordered.

Functionally, may act as an RNA-binding protein. The C-terminal region is highly homologous to the bornavirus nucleocapsid N protein that binds viral RNA and oligomerizes. The viral protein also possesses a nuclear import and a nuclear export signal. These 2 signals seem absent in EBLN-2 supporting an unrelated function in Human. The chain is Endogenous Bornavirus-like nucleoprotein 2 (EBLN2) from Homo sapiens (Human).